Here is a 527-residue protein sequence, read N- to C-terminus: GRSVVEFGDMVCKRQQSAVSSAGSEKPSGKEENVHSPEDKRVTKSKEKSKHLRTRTGRKVKSDVTDRFRKKEQSSESSEGEKKQGRQRTGTRGKKSTDLKEEKVKREREYESSSDGTEKLPEGEEIGLFSKGVKQNKNDTTDEAKKGKKWKDKSCEKKEELSDSVDRLPVKGESCDSSEDKKTRNRVSLREKKQFSLPAKSSGKRPECSSSDTERSVKGECCDSTDKRVKRIDLRERRSSNSKRSTKEVKSGSSSSDAEGSSEDAKKQKKQRMSAKKKNSNTKERKRKSLRATTTKRKQADITSSSSDIGDDDQNSAGEESSDEQKIKPVTENLVLPSHTGFCQSSGDEAFSKSVPATVDDDDDDNDPENRIAKKMLLEEIKANLSSDEDGSSDDEPKEGEKKRIGKQSEETPGDDGSNQVNSESDSDSEESKKPRYRHRLLRHKLSLSDGESGGEKKTKPKEHKETKGRNRRKVSSEDSEDTDFQESGVSEEVSESEDEQRPRTRSAKKAELEENQRSYKQKKKRR.

The segment at 1-527 (GRSVVEFGDM…RSYKQKKKRR (527 aa)) is disordered. The segment covering 14 to 23 (RQQSAVSSAG) has biased composition (polar residues). The segment covering 27–46 (PSGKEENVHSPEDKRVTKSK) has biased composition (basic and acidic residues). Basic residues predominate over residues 47–59 (EKSKHLRTRTGRK). The span at 60 to 84 (VKSDVTDRFRKKEQSSESSEGEKKQ) shows a compositional bias: basic and acidic residues. Phosphoserine is present on residues Ser62 and Ser74. Basic residues predominate over residues 85–94 (GRQRTGTRGK). 4 stretches are compositionally biased toward basic and acidic residues: residues 95 to 122 (KSTD…KLPE), 136 to 145 (NKNDTTDEAK), 152 to 194 (DKSC…EKKQ), and 204 to 250 (KRPE…KEVK). Residue Lys105 forms a Glycyl lysine isopeptide (Lys-Gly) (interchain with G-Cter in SUMO2) linkage. Phosphoserine is present on residues Ser112, Ser113, and Ser114. Phosphoserine is present on Ser162. Arg184 is subject to Citrulline. Positions 267-297 (KQKKQRMSAKKKNSNTKERKRKSLRATTTKR) are enriched in basic residues. The interaction with DAXX stretch occupies residues 290–427 (LRATTTKRKQ…SNQVNSESDS (138 aa)). A phosphoserine mark is found at Ser345, Ser346, and Ser354. A compositionally biased stretch (basic and acidic residues) spans 368–382 (PENRIAKKMLLEEIK). Over residues 387–398 (SDEDGSSDDEPK) the composition is skewed to acidic residues. Basic and acidic residues predominate over residues 399–410 (EGEKKRIGKQSE). 3 positions are modified to phosphoserine: Ser423, Ser425, and Ser427. The segment covering 435-446 (PRYRHRLLRHKL) has biased composition (basic residues). 2 positions are modified to phosphoserine: Ser449 and Ser453. 2 stretches are compositionally biased toward basic and acidic residues: residues 454 to 469 (GGEK…ETKG) and 509 to 518 (KKAELEENQR).

The protein belongs to the SNF2/RAD54 helicase family. In terms of assembly, interacts with DAXX to form the chromatin remodeling complex ATRX:DAXX. Probably binds EZH2. Binds annexin V in a calcium and phosphatidylcholine/phosphatidylserine-dependent manner. Interacts directly with CBX5 via the PxVxL motif. Interacts with RAD50, MRE11 and NBN; indicative for an association with the MRN complex. Interacts with histone MACROH2A1. Interacts with histone H3 peptides methylated at 'Lys-10' with preferences H3K9me3 &gt; H3K9me2 &gt; H3K9me1. Interacts with histone H3 peptides unmethylated at 'Lys-5' (H3K4me0). Interacts with MECP2, SMC1 and SMC3. Interacts with SETDB1, TRIM28 and ZNF274. Post-translationally, citrullinated by PADI4.

The protein localises to the nucleus. The protein resides in the chromosome. It localises to the telomere. It is found in the PML body. It catalyses the reaction ATP + H2O = ADP + phosphate + H(+). Involved in transcriptional regulation and chromatin remodeling. Facilitates DNA replication in multiple cellular environments and is required for efficient replication of a subset of genomic loci. Binds to DNA tandem repeat sequences in both telomeres and euchromatin and in vitro binds DNA quadruplex structures. May help stabilizing G-rich regions into regular chromatin structures by remodeling G4 DNA and incorporating H3.3-containing nucleosomes. Catalytic component of the chromatin remodeling complex ATRX:DAXX which has ATP-dependent DNA translocase activity and catalyzes the replication-independent deposition of histone H3.3 in pericentric DNA repeats outside S-phase and telomeres, and the in vitro remodeling of H3.3-containing nucleosomes. Its heterochromatin targeting is proposed to involve a combinatorial readout of histone H3 modifications (specifically methylation states of H3K9 and H3K4) and association with CBX5. Involved in maintaining telomere structural integrity in embryonic stem cells probably implying recruitment of CBX5 to telomeres. May be involved in transcriptional regulation of telomeric repeat-containing RNA (TERRA). Acts as a negative regulator of chromatin incorporation of transcriptionally repressive histone MACROH2A1, particularily at telomeres. Participates in the allele-specific gene expression at the imprinted IGF2/H19 gene locus. On the maternal allele, required for the chromatin occupancy of SMC1 and CTCTF within the H19 imprinting control region (ICR) and involved in esatblishment of histone tails modifications in the ICR. Binds to zinc-finger coding genes with atypical chromatin signatures and regulates its H3K9me3 levels. Forms a complex with ZNF274, TRIM28 and SETDB1 to facilitate the deposition and maintenance of H3K9me3 at the 3' exons of zinc-finger genes. In Rattus norvegicus (Rat), this protein is Transcriptional regulator ATRX (Atrx).